Here is a 397-residue protein sequence, read N- to C-terminus: 8-amino-7-oxononanoate synthase (397 aa).

Substrate is bound at residue Arg-24. 110-111 (GY) is a pyridoxal 5'-phosphate binding site. His-135 serves as a coordination point for substrate. Pyridoxal 5'-phosphate-binding residues include Ser-183, His-211, and Thr-240. Lys-243 bears the N6-(pyridoxal phosphate)lysine mark. Residue Thr-357 coordinates substrate.

The protein belongs to the class-II pyridoxal-phosphate-dependent aminotransferase family. BioF subfamily. As to quaternary structure, homodimer. It depends on pyridoxal 5'-phosphate as a cofactor.

It carries out the reaction 6-carboxyhexanoyl-[ACP] + L-alanine + H(+) = (8S)-8-amino-7-oxononanoate + holo-[ACP] + CO2. It participates in cofactor biosynthesis; biotin biosynthesis. In terms of biological role, catalyzes the decarboxylative condensation of pimeloyl-[acyl-carrier protein] and L-alanine to produce 8-amino-7-oxononanoate (AON), [acyl-carrier protein], and carbon dioxide. This Hydrogenovibrio crunogenus (strain DSM 25203 / XCL-2) (Thiomicrospira crunogena) protein is 8-amino-7-oxononanoate synthase.